We begin with the raw amino-acid sequence, 1058 residues long: Carbamoyl phosphate synthase large chain (1058 aa).

Residues 1 to 401 (MPKRTDIQKI…SLLKACRSLE (401 aa)) are carboxyphosphate synthetic domain. ATP contacts are provided by Arg-129, Arg-169, Gly-175, Gly-176, Arg-208, Ile-210, Glu-215, Gly-241, Ile-242, His-243, Gln-284, and Glu-298. The ATP-grasp 1 domain occupies 133–327 (KQLMEELEQP…IAKLAAKIAV (195 aa)). Residues Gln-284, Glu-298, and Asn-300 each coordinate Mg(2+). Residues Gln-284, Glu-298, and Asn-300 each contribute to the Mn(2+) site. The interval 402–546 (IGVHHNEIPE…YSTYGWENES (145 aa)) is oligomerization domain. Residues 547-929 (IRSDKESVLV…ALYKAFEASY (383 aa)) are carbamoyl phosphate synthetic domain. The ATP-grasp 2 domain maps to 671 to 861 (EQALKELDIP…MAQVATKLIL (191 aa)). Residues Arg-707, Ser-746, Ile-748, Glu-752, Gly-777, Val-778, His-779, Ser-780, Gln-820, and Glu-832 each contribute to the ATP site. Mg(2+) is bound by residues Gln-820, Glu-832, and Asn-834. 3 residues coordinate Mn(2+): Gln-820, Glu-832, and Asn-834. Positions 930 to 1058 (LHLPTFGNVV…ESRSFVTEAI (129 aa)) constitute an MGS-like domain. The interval 930–1058 (LHLPTFGNVV…ESRSFVTEAI (129 aa)) is allosteric domain.

This sequence belongs to the CarB family. Composed of two chains; the small (or glutamine) chain promotes the hydrolysis of glutamine to ammonia, which is used by the large (or ammonia) chain to synthesize carbamoyl phosphate. Tetramer of heterodimers (alpha,beta)4. Mg(2+) is required as a cofactor. The cofactor is Mn(2+).

It carries out the reaction hydrogencarbonate + L-glutamine + 2 ATP + H2O = carbamoyl phosphate + L-glutamate + 2 ADP + phosphate + 2 H(+). It catalyses the reaction hydrogencarbonate + NH4(+) + 2 ATP = carbamoyl phosphate + 2 ADP + phosphate + 2 H(+). It functions in the pathway amino-acid biosynthesis; L-arginine biosynthesis; carbamoyl phosphate from bicarbonate: step 1/1. Its pathway is pyrimidine metabolism; UMP biosynthesis via de novo pathway; (S)-dihydroorotate from bicarbonate: step 1/3. Large subunit of the glutamine-dependent carbamoyl phosphate synthetase (CPSase). CPSase catalyzes the formation of carbamoyl phosphate from the ammonia moiety of glutamine, carbonate, and phosphate donated by ATP, constituting the first step of 2 biosynthetic pathways, one leading to arginine and/or urea and the other to pyrimidine nucleotides. The large subunit (synthetase) binds the substrates ammonia (free or transferred from glutamine from the small subunit), hydrogencarbonate and ATP and carries out an ATP-coupled ligase reaction, activating hydrogencarbonate by forming carboxy phosphate which reacts with ammonia to form carbamoyl phosphate. This Streptococcus pneumoniae serotype 2 (strain D39 / NCTC 7466) protein is Carbamoyl phosphate synthase large chain.